The chain runs to 1776 residues: 6-methylsalicylic acid synthase (1776 aa).

A compositionally biased stretch (low complexity) spans 1–18; that stretch reads MHSVSPSTYPSGGTSPAP. Residues 1–26 form a disordered region; sequence MHSVSPSTYPSGGTSPAPADTPGTEY. Positions 32-457 constitute a Ketosynthase family 3 (KS3) domain; sequence SNDVAVVGMA…GTVSHAVIEE (426 aa). Active-site for beta-ketoacyl synthase activity residues include C204, H339, and H379. The tract at residues 567-880 is malonyl-CoA:ACP transacylase (MAT) domain; it reads VWVFSGHGAQ…IAQLHCRGAE (314 aa). Residues 925 to 1044 are N-terminal hotdog fold; it reads HTLLGQRIPV…AYWDRKVLGS (120 aa). Positions 925 to 1196 are dehydratase (DH) domain; it reads HTLLGQRIPV…FTAMRFSEIE (272 aa). Residues 925 to 1201 form the PKS/mFAS DH domain; sequence HTLLGQRIPV…FSEIEGTPGV (277 aa). The Proton acceptor; for dehydratase activity role is filled by H957. Residues 1058-1201 form a C-terminal hotdog fold region; that stretch reads TTKLADNFSI…FSEIEGTPGV (144 aa). The Proton donor; for dehydratase activity role is filled by D1113. Residues 1205 to 1657 are product template (PT) domain; sequence MESLVHQIAW…LRSLAIDDGE (453 aa). The 75-residue stretch at 1700-1774 folds into the Carrier domain; it reads AYLDEKIRGC…HLVVWFAEKI (75 aa). S1734 is subject to O-(pantetheine 4'-phosphoryl)serine.

The protein resides in the cytoplasm. Its subcellular location is the cytosol. It catalyses the reaction 3 malonyl-CoA + acetyl-CoA + NADPH + 3 H(+) = 6-methylsalicylate + 3 CO2 + NADP(+) + 4 CoA + H2O. Its pathway is mycotoxin biosynthesis; patulin biosynthesis. 6-methylsalicylic acid synthase; part of the gene cluster that mediates the biosynthesis of patulin, an acetate-derived tetraketide mycotoxin produced by several fungal species that shows antimicrobial properties against several bacteria. PatK catalyzes the first step of the pathway which is the synthesis of 6-methylsalicylic acid via condensation of 1 acetate and 3 malonate units. The pathway begins with the synthesis of 6-methylsalicylic acid by the polyketide synthase (PKS) patK via condensation of acetate and malonate units. The 6-methylsalicylic acid decarboxylase patG then catalyzes the decarboxylation of 6-methylsalicylic acid to yield m-cresol (also known as 3-methylphenol). These first reactions occur in the cytosol. The intermediate m-cresol is then transported into the endoplasmic reticulum where the cytochrome P450 monooxygenase patH converts it to m-hydroxybenzyl alcohol, which is further converted to gentisyl alcohol by the cytochrome P450 monooxygenase patI. The oxidoreductases patJ and patO further convert gentisyl alcohol to isoepoxydon in the vacuole. PatN catalyzes then the transformation of isoepoxydon into phyllostine. The cluster protein patF is responsible for the conversion from phyllostine to neopatulin whereas the alcohol dehydrogenase patD converts neopatulin to E-ascladiol. The steps between isoepoxydon and E-ascladiol occur in the cytosol, and E-ascladiol is probably secreted to the extracellular space by one of the cluster-specific transporters patC or patM. Finally, the secreted patulin synthase patE catalyzes the conversion of E-ascladiol to patulin. The protein is 6-methylsalicylic acid synthase of Penicillium expansum (Blue mold rot fungus).